A 1484-amino-acid polypeptide reads, in one-letter code: Cystic fibrosis transmembrane conductance regulator (1484 aa).

Topologically, residues 1–77 (MQRSPLEKAS…KLINALRRCF (77 aa)) are cytoplasmic. The helical transmembrane segment at 78–98 (FWRFMFYGIILYLGEVTKSVQ) threads the bilayer. The ABC transmembrane type-1 1 domain maps to 81 to 365 (FMFYGIILYL…WAVQTWYDSL (285 aa)). Topologically, residues 99-122 (PLLLGRIIASYDPDNKEERSIAIY) are extracellular. Residues 123–146 (LGIGLCLLFVMRTLLLHPAIFGLH) form a helical membrane-spanning segment. The Cytoplasmic portion of the chain corresponds to 147–195 (RIGMQMRIAMFSLIYKKTLKLSSRVLDKISIGQLVSLLSNNLNKFDEGL). The chain crosses the membrane as a helical span at residues 196–216 (ALAHFVWIAPLQVTLLMGLLW). The Extracellular segment spans residues 217–222 (DLLQAS). Residues 223 to 243 (AFCGLAFLIVLALFQAGLGRM) form a helical membrane-spanning segment. The Cytoplasmic portion of the chain corresponds to 244 to 298 (MMKYRDQRAGKINERLVITSEMIENIQSVKAYCWEEAMEKMIESIRQTELKLTRK). A helical membrane pass occupies residues 299-319 (AAYVRYFNSSAFFFSGFFVVF). Topologically, residues 320 to 339 (LSVLPYALIKTIVLRKIFTT) are extracellular. Residues 340–358 (ISFCIVLRMAVTRQFPWAV) form a helical membrane-spanning segment. The Cytoplasmic portion of the chain corresponds to 359–860 (QTWYDSLGAI…YLRYVTIHKS (502 aa)). ATP-binding positions include W401, S434, 458–465 (GSTGAGKT), and Q493. Residues 423 to 646 (NADNSLFFSN…RPDFSSKLMG (224 aa)) enclose the ABC transporter 1 domain. Residue C524 is the site of S-palmitoyl cysteine attachment. A phosphoserine mark is found at S549 and S660. The interval 654-833 (SAERRNSIIT…EEINEEDLKE (180 aa)) is disordered R region. At S670 the chain carries Phosphoserine; by PKA. Position 686 is a phosphoserine (S686). Residue K688 forms a Glycyl lysine isopeptide (Lys-Gly) (interchain with G-Cter in ubiquitin) linkage. A phosphoserine mark is found at S700 and S712. The residue at position 717 (T717) is a Phosphothreonine. Phosphoserine is present on residues S737, S769, S792, S797, and S815. Residues 861-881 (LVFVLIWCLVIFLAEVAISLV) form a helical membrane-spanning segment. An ABC transmembrane type-1 2 domain is found at 861–1157 (LVFVLIWCLV…AVNSSIDVDS (297 aa)). The Extracellular segment spans residues 882-920 (VLWLLKKTASQDKGNSTQSINSSYTVIFTSTSTYYVFYI). N896 and N902 each carry an N-linked (GlcNAc...) asparagine glycan. Residues 921 to 941 (YVGVADTLLALGFFRGLPLVH) form a discontinuously helical membrane-spanning segment. Topologically, residues 942–992 (TLITVSKILHHKMLHAVLQAPMSTLNALKAGGILNRFSKDIAILDDLLPLT) are cytoplasmic. A helical membrane pass occupies residues 993-1013 (IFDFVQLLLIVIGAVTVVSAL). The Extracellular segment spans residues 1014–1015 (QP). A helical transmembrane segment spans residues 1016 to 1036 (YIFLATVPVIAAFIMLRAYFL). Over 1037 to 1097 (HTSQQLKQLE…TANWFLYLST (61 aa)) the chain is Cytoplasmic. Residues 1098–1118 (LRWFQMRMEIIFVIFFIAITF) form a helical membrane-spanning segment. Residues 1119 to 1132 (ISILTTGEGVGAVG) lie on the Extracellular side of the membrane. A helical membrane pass occupies residues 1133–1153 (IILTLAMNIMGTLQWAVNSSI). At 1154–1484 (DVDSLMRSVS…TEEEVQETRL (331 aa)) the chain is on the cytoplasmic side. An ABC transporter 2 domain is found at 1214-1447 (MTVKDLTAKY…KSLFRQAISP (234 aa)). Residues Y1223 and 1248–1255 (GRTGSGKS) contribute to the ATP site. The interaction with GORASP2 stretch occupies residues 1390–1484 (RTLKQAFADC…TEEEVQETRL (95 aa)). Residue C1399 is the site of S-palmitoyl cysteine attachment. Residues S1448 and S1460 each carry the phosphoserine modification. Residues 1456–1465 (HRNSSKHKSR) show a composition bias toward basic residues. The disordered stretch occupies residues 1456 to 1484 (HRNSSKHKSRSQIAALKEETEEEVQETRL). The span at 1474–1484 (ETEEEVQETRL) shows a compositional bias: acidic residues. A PDZ-binding motif is present at residues 1482–1484 (TRL).

This sequence belongs to the ABC transporter superfamily. ABCC family. CFTR transporter (TC 3.A.1.202) subfamily. In terms of assembly, monomer; does not require oligomerization for channel activity. May form oligomers in the membrane. Interacts with SLC26A3, SLC26A6 and NHERF1. Interacts with SHANK2. Interacts with MYO6. Interacts (via C-terminus) with GOPC (via PDZ domain); this promotes CFTR internalization and thereby decreases channel activity. Interacts with SLC4A7 through NHERF1. Found in a complex with MYO5B and RAB11A. Interacts with ANO1. Interacts with SLC26A8. Interacts with AHCYL1; the interaction increases CFTR activity. Interacts with CSE1L. The core-glycosylated form interacts with GORASP2 (via PDZ GRASP-type 1 domain) in respone to ER stress. Interacts with MARCHF2; the interaction leads to CFTR ubiqtuitination and degradation. Interacts with ADGRG2. In terms of processing, N-glycosylated. Post-translationally, phosphorylated; cAMP treatment promotes phosphorylation and activates the channel. Dephosphorylation decreases the ATPase activity (in vitro). Phosphorylation at PKA sites activates the channel. Phosphorylation at PKC sites enhances the response to phosphorylation by PKA. Phosphorylated by AMPK; this inhibits channel activity. Ubiquitinated, leading to its degradation in the lysosome. Deubiquitination by USP10 in early endosomes enhances its endocytic recycling to the cell membrane. Ubiquitinated by RNF185 during ER stress. Ubiquitinated by MARCHF2.

It is found in the apical cell membrane. The protein localises to the early endosome membrane. Its subcellular location is the cell membrane. It localises to the recycling endosome membrane. The protein resides in the endoplasmic reticulum membrane. It is found in the nucleus. It catalyses the reaction ATP + H2O + closed Cl(-) channel = ADP + phosphate + open Cl(-) channel.. The enzyme catalyses chloride(in) = chloride(out). It carries out the reaction hydrogencarbonate(in) = hydrogencarbonate(out). The catalysed reaction is ATP + H2O = ADP + phosphate + H(+). Its function is as follows. Epithelial ion channel that plays an important role in the regulation of epithelial ion and water transport and fluid homeostasis. Mediates the transport of chloride ions across the cell membrane. Possesses an intrinsic ATPase activity and utilizes ATP to gate its channel; the passive flow of anions through the channel is gated by cycles of ATP binding and hydrolysis by the ATP-binding domains. The ion channel is also permeable to HCO(3)(-); selectivity depends on the extracellular chloride concentration. Exerts its function also by modulating the activity of other ion channels and transporters. Contributes to the regulation of the pH and the ion content of the epithelial fluid layer. Modulates the activity of the epithelial sodium channel (ENaC) complex, in part by regulating the cell surface expression of the ENaC complex. May regulate bicarbonate secretion and salvage in epithelial cells by regulating the transporter SLC4A7. Can inhibit the chloride channel activity of ANO1. Plays a role in the chloride and bicarbonate homeostasis during sperm epididymal maturation and capacitation. The sequence is that of Cystic fibrosis transmembrane conductance regulator from Mustela putorius furo (European domestic ferret).